Consider the following 461-residue polypeptide: Proline--tRNA ligase (461 aa).

Belongs to the class-II aminoacyl-tRNA synthetase family. ProS type 3 subfamily. In terms of assembly, homodimer.

It localises to the cytoplasm. The catalysed reaction is tRNA(Pro) + L-proline + ATP = L-prolyl-tRNA(Pro) + AMP + diphosphate. Catalyzes the attachment of proline to tRNA(Pro) in a two-step reaction: proline is first activated by ATP to form Pro-AMP and then transferred to the acceptor end of tRNA(Pro). The protein is Proline--tRNA ligase of Methanococcus vannielii (strain ATCC 35089 / DSM 1224 / JCM 13029 / OCM 148 / SB).